Reading from the N-terminus, the 137-residue chain is Lysozyme (137 aa).

Residues 1–18 (MQKLIIFALVVLCVGSEA) form the signal peptide. A C-type lysozyme domain is found at 19-137 (KTFTRCGLVH…QGSLPDISSC (119 aa)). Intrachain disulfides connect cysteine 24-cysteine 137, cysteine 45-cysteine 127, cysteine 79-cysteine 93, and cysteine 89-cysteine 107. Active-site residues include glutamate 50 and aspartate 67.

Belongs to the glycosyl hydrolase 22 family.

The enzyme catalyses Hydrolysis of (1-&gt;4)-beta-linkages between N-acetylmuramic acid and N-acetyl-D-glucosamine residues in a peptidoglycan and between N-acetyl-D-glucosamine residues in chitodextrins.. Lysozymes have primarily a bacteriolytic function; those in tissues and body fluids are associated with the monocyte-macrophage system and enhance the activity of immunoagents. Active against E.coli and M.luteus. This Bombyx mori (Silk moth) protein is Lysozyme.